The following is a 77-amino-acid chain: Small ribosomal subunit protein bS16 (77 aa).

The protein belongs to the bacterial ribosomal protein bS16 family.

This Helicobacter hepaticus (strain ATCC 51449 / 3B1) protein is Small ribosomal subunit protein bS16.